The primary structure comprises 346 residues: MRFVDRCRLKVIAGDGGNGAIAFRREKYIPFGGPAGGDGGRGGDVVFVGDGGLSTLLDFTYARTLEADRGEHGMGSDCHGRAGADRVEKLPVGTQIFDAESGELLADVTEHGQRVIVARGGKGGRGNLHFKSPHDRAPRRAEPGEPGEARELRLELKVLADVGLLGFPNAGKSTFVAAVSAARPKIGDYPFTTLTPILGMVEIGGGVRAGGSSFVIADIPGLVPGASEGVGLGIQFLRHVERTRALLHLVTLDPGEGREPLADYRALRKELKKFSPEIAERPEIVVLTKADLTEVRDAYPKLKARFAKAKVKLHLISAATGEGVPELVRELAALARKREEPAEQDG.

Residues 1-159 (MRFVDRCRLK…RELRLELKVL (159 aa)) form the Obg domain. Residues 122-147 (KGGRGNLHFKSPHDRAPRRAEPGEPG) form a disordered region. Over residues 132-147 (SPHDRAPRRAEPGEPG) the composition is skewed to basic and acidic residues. Positions 160–336 (ADVGLLGFPN…LVRELAALAR (177 aa)) constitute an OBG-type G domain. GTP-binding positions include 166-173 (GFPNAGKS), 191-195 (FTTLT), 218-221 (DIPG), 288-291 (TKAD), and 317-319 (SAA). Positions 173 and 193 each coordinate Mg(2+).

This sequence belongs to the TRAFAC class OBG-HflX-like GTPase superfamily. OBG GTPase family. Monomer. Mg(2+) is required as a cofactor.

The protein localises to the cytoplasm. In terms of biological role, an essential GTPase which binds GTP, GDP and possibly (p)ppGpp with moderate affinity, with high nucleotide exchange rates and a fairly low GTP hydrolysis rate. Plays a role in control of the cell cycle, stress response, ribosome biogenesis and in those bacteria that undergo differentiation, in morphogenesis control. This Sorangium cellulosum (strain So ce56) (Polyangium cellulosum (strain So ce56)) protein is GTPase Obg.